Consider the following 169-residue polypeptide: Large ribosomal subunit protein uL10 (169 aa).

The protein belongs to the universal ribosomal protein uL10 family. As to quaternary structure, part of the ribosomal stalk of the 50S ribosomal subunit. The N-terminus interacts with L11 and the large rRNA to form the base of the stalk. The C-terminus forms an elongated spine to which L12 dimers bind in a sequential fashion forming a multimeric L10(L12)X complex.

Functionally, forms part of the ribosomal stalk, playing a central role in the interaction of the ribosome with GTP-bound translation factors. This Orientia tsutsugamushi (strain Boryong) (Rickettsia tsutsugamushi) protein is Large ribosomal subunit protein uL10.